The chain runs to 159 residues: MHFDWSDFIWTLINFFVLLFILKILLYKPVLKTIEDRKKSIEESLEKAAKAQEEAERIKAEYDGMIAKAREEAREIIAKAQKTAQAEKEEIIATAQREAQSLLADAKATIAQEKEKALRELRQEIGNLAVLAAGKILNRAVTLEDHQKLVDEFLNEVKM.

A helical membrane pass occupies residues 7-27 (DFIWTLINFFVLLFILKILLY).

Belongs to the ATPase B chain family. In terms of assembly, F-type ATPases have 2 components, F(1) - the catalytic core - and F(0) - the membrane proton channel. F(1) has five subunits: alpha(3), beta(3), gamma(1), delta(1), epsilon(1). F(0) has three main subunits: a(1), b(2) and c(10-14). The alpha and beta chains form an alternating ring which encloses part of the gamma chain. F(1) is attached to F(0) by a central stalk formed by the gamma and epsilon chains, while a peripheral stalk is formed by the delta and b chains.

The protein resides in the cell membrane. Functionally, f(1)F(0) ATP synthase produces ATP from ADP in the presence of a proton or sodium gradient. F-type ATPases consist of two structural domains, F(1) containing the extramembraneous catalytic core and F(0) containing the membrane proton channel, linked together by a central stalk and a peripheral stalk. During catalysis, ATP synthesis in the catalytic domain of F(1) is coupled via a rotary mechanism of the central stalk subunits to proton translocation. In terms of biological role, component of the F(0) channel, it forms part of the peripheral stalk, linking F(1) to F(0). The protein is ATP synthase subunit b of Carboxydothermus hydrogenoformans (strain ATCC BAA-161 / DSM 6008 / Z-2901).